Reading from the N-terminus, the 882-residue chain is Alanine--tRNA ligase (882 aa).

Zn(2+)-binding residues include histidine 563, histidine 567, cysteine 665, and histidine 669.

It belongs to the class-II aminoacyl-tRNA synthetase family. The cofactor is Zn(2+).

The protein resides in the cytoplasm. The catalysed reaction is tRNA(Ala) + L-alanine + ATP = L-alanyl-tRNA(Ala) + AMP + diphosphate. In terms of biological role, catalyzes the attachment of alanine to tRNA(Ala) in a two-step reaction: alanine is first activated by ATP to form Ala-AMP and then transferred to the acceptor end of tRNA(Ala). Also edits incorrectly charged Ser-tRNA(Ala) and Gly-tRNA(Ala) via its editing domain. The chain is Alanine--tRNA ligase from Synechococcus sp. (strain RCC307).